We begin with the raw amino-acid sequence, 278 residues long: Sulfur carrier protein FdhD (278 aa).

Residue C121 is the Cysteine persulfide intermediate of the active site. Mo-bis(molybdopterin guanine dinucleotide) is bound at residue F260–R265.

Belongs to the FdhD family.

It localises to the cytoplasm. Required for formate dehydrogenase (FDH) activity. Acts as a sulfur carrier protein that transfers sulfur from IscS to the molybdenum cofactor prior to its insertion into FDH. The polypeptide is Sulfur carrier protein FdhD (Salmonella agona (strain SL483)).